The primary structure comprises 479 residues: Anaerobic nitric oxide reductase flavorubredoxin (479 aa).

The tract at residues 30–210 (LRGSSYNSYL…PFSRLVTPKI (181 aa)) is zinc metallo-hydrolase. Histidine 79, glutamate 81, aspartate 83, histidine 147, aspartate 166, and histidine 227 together coordinate Fe cation. Positions 254 to 393 (ITIFYDTMSN…LCREHGREIA (140 aa)) constitute a Flavodoxin-like domain. FMN contacts are provided by residues 260–264 (TMSNN) and 342–369 (AFGS…EMSL). The 52-residue stretch at 423-474 (GPRMQCSVCQWIYDPAKGEPMQDVAPGTPWSEVPDNFLCPECSLGKDVFEEL) folds into the Rubredoxin-like domain. Residues cysteine 428, cysteine 431, cysteine 461, and cysteine 464 each contribute to the Fe cation site.

This sequence in the N-terminal section; belongs to the zinc metallo-hydrolase group 3 family. Homotetramer. Fe cation is required as a cofactor. It depends on FMN as a cofactor.

It is found in the cytoplasm. The protein operates within nitrogen metabolism; nitric oxide reduction. Functionally, anaerobic nitric oxide reductase; uses NADH to detoxify nitric oxide (NO), protecting several 4Fe-4S NO-sensitive enzymes. Has at least 2 reductase partners, only one of which (NorW, flavorubredoxin reductase) has been identified. NO probably binds to the di-iron center; electrons enter from the NorW at rubredoxin and are transferred sequentially to the FMN center and the di-iron center. Also able to function as an aerobic oxygen reductase. This Shigella boydii serotype 4 (strain Sb227) protein is Anaerobic nitric oxide reductase flavorubredoxin.